The sequence spans 575 residues: Transcription factor COE2 (575 aa).

The interval 62–65 (RKSN) is interaction with DNA. The segment at 150-169 (CRVLLTHEVMCSRCCEKKSC) adopts a C5-type zinc-finger fold. Interaction with DNA stretches follow at residues 196–203 (NCLKTAGN) and 235–238 (NNSK). The IPT/TIG domain maps to 253-336 (PCIKAISPSE…KGAPGRFIYT (84 aa)). The span at 441-453 (STQGNNQGYIRNT) shows a compositional bias: polar residues. Residues 441–479 (STQGNNQGYIRNTSSISPRGYSSSSTPQQSNYSTSSNSM) form a disordered region. Low complexity predominate over residues 454-479 (SSISPRGYSSSSTPQQSNYSTSSNSM).

It belongs to the COE family. In terms of assembly, forms either a homodimer or a heterodimer with a related family member. Interacts with SIX1.

Its subcellular location is the nucleus. Transcription factor that, in osteoblasts, activates the decoy receptor for RANKL, TNFRSF11B, which in turn regulates osteoclast differentiation. Acts in synergy with the Wnt-responsive LEF1/CTNNB1 pathway. Recognizes variations of the palindromic sequence 5'-ATTCCCNNGGGAATT-3'. The polypeptide is Transcription factor COE2 (EBF2) (Bos taurus (Bovine)).